A 640-amino-acid chain; its full sequence is 1,4-alpha-glucan branching enzyme GlgB (640 aa).

The active-site Nucleophile is Asp318. The active-site Proton donor is the Glu371.

It belongs to the glycosyl hydrolase 13 family. GlgB subfamily. Monomer.

The catalysed reaction is Transfers a segment of a (1-&gt;4)-alpha-D-glucan chain to a primary hydroxy group in a similar glucan chain.. It functions in the pathway glycan biosynthesis; glycogen biosynthesis. Functionally, catalyzes the formation of the alpha-1,6-glucosidic linkages in glycogen by scission of a 1,4-alpha-linked oligosaccharide from growing alpha-1,4-glucan chains and the subsequent attachment of the oligosaccharide to the alpha-1,6 position. In Francisella tularensis subsp. novicida (strain U112), this protein is 1,4-alpha-glucan branching enzyme GlgB.